We begin with the raw amino-acid sequence, 118 residues long: uncharacterized protein (118 aa).

The disordered stretch occupies residues 1 to 49 (MDYVGGSLKLKNVKKKPLKKKKKDSKKLAEKVQEHSSRDKSPLEENGVS). Residues 11–25 (KNVKKKPLKKKKKDS) show a composition bias toward basic residues. A compositionally biased stretch (basic and acidic residues) spans 26-43 (KKLAEKVQEHSSRDKSPL).

This is an uncharacterized protein from Schizosaccharomyces pombe (strain 972 / ATCC 24843) (Fission yeast).